The primary structure comprises 256 residues: 5'-nucleotidase SurE (256 aa).

Residues Asp-9, Asp-10, Ser-40, and Asn-94 each coordinate a divalent metal cation.

Belongs to the SurE nucleotidase family. A divalent metal cation serves as cofactor.

Its subcellular location is the cytoplasm. It catalyses the reaction a ribonucleoside 5'-phosphate + H2O = a ribonucleoside + phosphate. Its function is as follows. Nucleotidase that shows phosphatase activity on nucleoside 5'-monophosphates. This is 5'-nucleotidase SurE from Campylobacter fetus subsp. fetus (strain 82-40).